The following is a 95-amino-acid chain: UPF0235 protein Adeh_1087 (95 aa).

The protein belongs to the UPF0235 family.

This Anaeromyxobacter dehalogenans (strain 2CP-C) protein is UPF0235 protein Adeh_1087.